Reading from the N-terminus, the 391-residue chain is 3-demethoxyubiquinol 3-hydroxylase (391 aa).

The protein belongs to the UbiH/COQ6 family. In terms of assembly, component of the Ubi complex metabolon, which regroups five ubiquinone biosynthesis proteins (UbiE, UbiF, UbiG, UbiH and UbiI) and two accessory factors (UbiK and the lipid-binding protein UbiJ). It depends on FAD as a cofactor.

It localises to the cytoplasm. The enzyme catalyses a 5-methoxy-2-methyl-3-(all-trans-polyprenyl)benzene-1,4-diol + AH2 + O2 = a 3-demethylubiquinol + A + H2O. It participates in cofactor biosynthesis; ubiquinone biosynthesis. Its function is as follows. Catalyzes the hydroxylation of 2-octaprenyl-3-methyl-6-methoxy-1,4-benzoquinol during ubiquinone biosynthesis. This is 3-demethoxyubiquinol 3-hydroxylase (ubiF) from Escherichia coli (strain K12).